The sequence spans 218 residues: Pyridoxine/pyridoxamine 5'-phosphate oxidase (218 aa).

Residues 14–17 and lysine 72 contribute to the substrate site; that span reads RREY. FMN-binding positions include 67 to 72, 82 to 83, arginine 88, lysine 89, and glutamine 111; these read RIVLLK and YT. Tyrosine 129, arginine 133, and serine 137 together coordinate substrate. Residues 146–147 and tryptophan 191 contribute to the FMN site; that span reads QS. Position 197 to 199 (197 to 199) interacts with substrate; it reads RLH. Position 201 (arginine 201) interacts with FMN.

Belongs to the pyridoxamine 5'-phosphate oxidase family. Homodimer. Requires FMN as cofactor.

It catalyses the reaction pyridoxamine 5'-phosphate + O2 + H2O = pyridoxal 5'-phosphate + H2O2 + NH4(+). The enzyme catalyses pyridoxine 5'-phosphate + O2 = pyridoxal 5'-phosphate + H2O2. It functions in the pathway cofactor metabolism; pyridoxal 5'-phosphate salvage; pyridoxal 5'-phosphate from pyridoxamine 5'-phosphate: step 1/1. It participates in cofactor metabolism; pyridoxal 5'-phosphate salvage; pyridoxal 5'-phosphate from pyridoxine 5'-phosphate: step 1/1. Its function is as follows. Catalyzes the oxidation of either pyridoxine 5'-phosphate (PNP) or pyridoxamine 5'-phosphate (PMP) into pyridoxal 5'-phosphate (PLP). The sequence is that of Pyridoxine/pyridoxamine 5'-phosphate oxidase from Salmonella paratyphi B (strain ATCC BAA-1250 / SPB7).